The chain runs to 360 residues: Phenylalanine--tRNA ligase alpha subunit (360 aa).

E260 lines the Mg(2+) pocket.

This sequence belongs to the class-II aminoacyl-tRNA synthetase family. Phe-tRNA synthetase alpha subunit type 1 subfamily. Tetramer of two alpha and two beta subunits. Requires Mg(2+) as cofactor.

The protein localises to the cytoplasm. The catalysed reaction is tRNA(Phe) + L-phenylalanine + ATP = L-phenylalanyl-tRNA(Phe) + AMP + diphosphate + H(+). The protein is Phenylalanine--tRNA ligase alpha subunit of Methylobacterium sp. (strain 4-46).